The following is a 102-amino-acid chain: Urease subunit beta (102 aa).

The protein belongs to the urease beta subunit family. As to quaternary structure, heterotrimer of UreA (gamma), UreB (beta) and UreC (alpha) subunits. Three heterotrimers associate to form the active enzyme.

Its subcellular location is the cytoplasm. It catalyses the reaction urea + 2 H2O + H(+) = hydrogencarbonate + 2 NH4(+). The protein operates within nitrogen metabolism; urea degradation; CO(2) and NH(3) from urea (urease route): step 1/1. The sequence is that of Urease subunit beta from Alteromonas mediterranea (strain DSM 17117 / CIP 110805 / LMG 28347 / Deep ecotype).